Consider the following 192-residue polypeptide: MTSSSGSLKLEIHTDDKTPGKWSVPLGDDVFRRFLSGGGGSEKAVFGEGSLFSPFLFGKYFDPSDAFPLWEFEAEVLLASLRSLGQCRVDWSQTDQAYVLKSDIPVVGKNNVQVYVDINGRVMEISGQWNSNKKAATNSDWRSGRWWEHGYVRRLELPSDADAKYSEAFLSNNDDYSFLEIRIPKINSKNKF.

The sHSP domain occupies 80–192 (SLRSLGQCRV…IPKINSKNKF (113 aa)).

Belongs to the small heat shock protein (HSP20) family. May form oligomeric structures.

It is found in the cytoplasm. This chain is 21.7 kDa class VI heat shock protein (HSP21.7), found in Arabidopsis thaliana (Mouse-ear cress).